The chain runs to 126 residues: UPF0538 protein C2orf76 homolog (126 aa).

This sequence belongs to the UPF0538 family.

The sequence is that of UPF0538 protein C2orf76 homolog from Xenopus tropicalis (Western clawed frog).